The following is a 245-amino-acid chain: 1-(5-phosphoribosyl)-5-[(5-phosphoribosylamino)methylideneamino] imidazole-4-carboxamide isomerase (245 aa).

Aspartate 11 (proton acceptor) is an active-site residue. The active-site Proton donor is aspartate 132.

It belongs to the HisA/HisF family.

It localises to the cytoplasm. It catalyses the reaction 1-(5-phospho-beta-D-ribosyl)-5-[(5-phospho-beta-D-ribosylamino)methylideneamino]imidazole-4-carboxamide = 5-[(5-phospho-1-deoxy-D-ribulos-1-ylimino)methylamino]-1-(5-phospho-beta-D-ribosyl)imidazole-4-carboxamide. The protein operates within amino-acid biosynthesis; L-histidine biosynthesis; L-histidine from 5-phospho-alpha-D-ribose 1-diphosphate: step 4/9. The polypeptide is 1-(5-phosphoribosyl)-5-[(5-phosphoribosylamino)methylideneamino] imidazole-4-carboxamide isomerase (Geobacillus kaustophilus (strain HTA426)).